Here is a 331-residue protein sequence, read N- to C-terminus: D-lactate dehydrogenase (331 aa).

Residues 156–157 (RI), Asp-176, 206–207 (MP), 233–235 (TAR), and Asp-259 each bind NAD(+). Residue Arg-235 is part of the active site. The active site involves Glu-264. His-296 serves as the catalytic Proton donor.

This sequence belongs to the D-isomer specific 2-hydroxyacid dehydrogenase family.

The enzyme catalyses (R)-lactate + NAD(+) = pyruvate + NADH + H(+). The protein is D-lactate dehydrogenase (ldhD) of Treponema pallidum (strain Nichols).